The following is a 1726-amino-acid chain: Merozoite surface protein 1 (1726 aa).

An N-terminal signal peptide occupies residues 1 to 19 (MKIIFFLCSFLFFIINTQC). A compositionally biased stretch (low complexity) spans 61–124 (KGASAQSGTS…SGTSGTSPSS (64 aa)). Residues 61-149 (KGASAQSGTS…PPADASDSDA (89 aa)) are disordered. Positions 125–134 (RSNTLPRSNT) are enriched in polar residues. Residue N133 is glycosylated (N-linked (GlcNAc...) asparagine). Over residues 135–144 (SSGASPPADA) the composition is skewed to low complexity. Residues N272, N501, N567, and N638 are each glycosylated (N-linked (GlcNAc...) asparagine). Residues 735 to 771 (SETTEDGGHSTHTLSQSGETEVTEETEETEETVGHTT) are disordered. Positions 755-765 (EVTEETEETEE) are enriched in acidic residues. 7 N-linked (GlcNAc...) asparagine glycosylation sites follow: N827, N924, N944, N990, N1016, N1114, and N1221. Residues 914-952 (TGTSSTSSPGNTTVNTAQSATHSNSQNQQSNASSTNTQN) are compositionally biased toward low complexity. The disordered stretch occupies residues 914–961 (TGTSSTSSPGNTTVNTAQSATHSNSQNQQSNASSTNTQNGVAVSSGPA). Disordered stretches follow at residues 1254–1284 (VTPP…TQIP) and 1476–1497 (KEKF…DEQK). Over residues 1270–1284 (VSGSSGSTKEETQIP) the composition is skewed to polar residues. Positions 1481–1490 (SSPPTTPPSP) are enriched in pro residues. Residue N1613 is glycosylated (N-linked (GlcNAc...) asparagine). EGF-like domains lie at 1617-1657 (HQCV…VENP) and 1658-1705 (NPTC…IFCS). 6 cysteine pairs are disulfide-bonded: C1619–C1630, C1624–C1640, C1642–C1653, C1661–C1674, C1668–C1688, and C1690–C1704. S1705 carries the GPI-anchor amidated serine lipid modification. Positions 1706–1726 (SSNFLGISFLLILMLILYSFI) are cleaved as a propeptide — removed in mature form.

As to quaternary structure, forms a complex composed of subunits p83, p30, p38, and p42 which remain non-covalently associated; the complex is formed at the merozoite surface prior to egress from host erythrocytes. Forms a complex composed of processed MSP1 subunits, MSP6 subunit p36 and MSP7; the complex is formed at the merozoite surface prior to egress from host erythrocytes. Within the complex, interacts (via subunit p38) with MSP6 subunit p36 and (via subunits p83, p30 and p38) with MSP7 (via subunit p22). Forms a complex composed of MSP1, MSP6, DBLMSP1 and DBLMSP2. Within the complex, interacts (via subunit p38) with DBLMSP1 and DBLMSP2. Forms a complex composed of MSP1, and rhoptry proteins RhopH3, RAP1 and CLAG9/RhopH3. Within the complex, interacts (via subunits p42 and p19) with RhopH3 (via C-terminus). Forms a complex composed of MSP1, MSP6, MSP7, MSP9 and MSP3; within the complex, MSP6 and MSP9 mediate the binding to the host erythrocyte. Interacts (via subunits p19 and p42) with MSP9; the interaction is direct; MSP1 subunits p19 or p42, and MSP9 form a co-ligand complex that interacts with host SLC4A1/Band 3 protein. May interact with PFD6. Interacts with host spectrin. In terms of assembly, interacts with host glycophorin GYPA in a sialic acid-independent manner. Interacts with host proinflammatory cytokine S100P; the interaction blocks S100P inflammatory and chemotactic activities. As to quaternary structure, interacts with host SLC4A1/Band 3 (via 5ABC region) on the host erythrocyte surface in a sialic acid-independent manner. Post-translationally, the p190 precursor is cleaved by SUB1 prior to merozoite egress into 4 subunits p83, p30, p38, and p42 which remain non-covalently associated. SUB1-mediated proteolytic cleavage occurs in an orderly manner; the first cleavage occurs at the p30/p38 site, followed by cleavage at the p83/p30 site, the last cleavage occurs at the p38/p42 site. The order of cleavage is essential for parasite viability. SUB1-mediated processing is essential for merozoite egress. In a second processing step during erythrocyte invasion, p42 is cleaved by SUB2 into p33 and p19; the latter remains attached to the merozoite surface via its GPI-anchor and is endocytosed during the subsequent ring stage.

It localises to the cell membrane. Its subcellular location is the secreted. It is found in the vacuole membrane. During the asexual blood stage, involved in merozoite egress from host erythrocytes possibly via its interaction with the host cytoskeleton protein spectrin resulting in the destabilization of the host cytoskeleton and thus leading to erythrocyte cell membrane rupture. Involved in the binding to host erythrocytes and is required for host erythrocyte invasion. In terms of biological role, by binding to host proinflammatory cytokine S100P may interfere with host immune responses. Its function is as follows. Involved in merozoite invasion of host erythrocytes. May play a role in the biogenesis and/or function of the food vacuole during the intraerythrocytic development. The polypeptide is Merozoite surface protein 1 (Plasmodium falciparum (isolate Palo Alto / Uganda)).